Here is a 100-residue protein sequence, read N- to C-terminus: Small ribosomal subunit protein uS14c (100 aa).

This sequence belongs to the universal ribosomal protein uS14 family. In terms of assembly, part of the 30S ribosomal subunit.

The protein localises to the plastid. The protein resides in the chloroplast. In terms of biological role, binds 16S rRNA, required for the assembly of 30S particles. The chain is Small ribosomal subunit protein uS14c from Ceratophyllum demersum (Rigid hornwort).